Consider the following 283-residue polypeptide: Homeobox protein Hox-C12b (283 aa).

The segment at residues 215–274 (TRKKRKPYSKLQLNELEGEFILNEFITRQRRRELSDRLNLTDQQVKIWFQNRRMKKKRLL) is a DNA-binding region (homeobox).

The protein belongs to the Abd-B homeobox family.

The protein localises to the nucleus. Sequence-specific transcription factor which is part of a developmental regulatory system that provides cells with specific positional identities on the anterior-posterior axis. This is Homeobox protein Hox-C12b (hoxc12b) from Danio rerio (Zebrafish).